A 303-amino-acid chain; its full sequence is Sushi domain-containing protein 6 (303 aa).

The first 39 residues, 1–39, serve as a signal peptide directing secretion; that stretch reads MCHGRIAPKSTSVFAVASVGHGVFLPLVILCTLLGDGLA. One can recognise a Sushi domain in the interval 40–104; it reads SVCPLPPEPE…KPAMEISCRL (65 aa). Residues 40 to 120 lie on the Extracellular side of the membrane; the sequence is SVCPLPPEPE…HTSLGVPTLS (81 aa). Disulfide bonds link Cys-42–Cys-89 and Cys-74–Cys-102. The chain crosses the membrane as a helical span at residues 121–141; the sequence is IVASTASSVALILLLVVLFVL. The Cytoplasmic segment spans residues 142-303; sequence LQPKLKSFHH…TDDIPLLKEA (162 aa). Disordered regions lie at residues 199–237 and 263–282; these read VLSE…GQSG and GSGN…NSDI.

It is found in the membrane. In terms of biological role, may play a role in growth-suppressive activity and cell death. May be involved in the production of chemokine molecules in umbilical vein endothelial cells (HUVECs) cultured in THP1 monocyte LPS-induced medium. Plays a role in preventing tumor onset. In Homo sapiens (Human), this protein is Sushi domain-containing protein 6.